The following is a 375-amino-acid chain: Probable butyrate kinase 2 (375 aa).

Belongs to the acetokinase family.

It localises to the cytoplasm. It carries out the reaction butanoate + ATP = butanoyl phosphate + ADP. In Thermotoga maritima (strain ATCC 43589 / DSM 3109 / JCM 10099 / NBRC 100826 / MSB8), this protein is Probable butyrate kinase 2.